The sequence spans 391 residues: Succinate--CoA ligase [GDP-forming] subunit beta, mitochondrial (391 aa).

Positions 5–233 (KKIMADHGVT…NAEFRQKEIF (229 aa)) constitute an ATP-grasp domain. GTP is bound by residues glutamine 16, 49–51 (GRG), and leucine 105. Positions 202 and 216 each coordinate Mg(2+). Substrate contacts are provided by residues asparagine 267 and 324–326 (GIV).

It belongs to the succinate/malate CoA ligase beta subunit family. GTP-specific subunit beta subfamily. Heterodimer of an alpha and a beta subunit. The beta subunit determines specificity for GTP. Mg(2+) serves as cofactor. In terms of tissue distribution, widely expressed. Not present in breast muscle.

The protein localises to the mitochondrion. The catalysed reaction is GTP + succinate + CoA = succinyl-CoA + GDP + phosphate. It functions in the pathway carbohydrate metabolism; tricarboxylic acid cycle; succinate from succinyl-CoA (ligase route): step 1/1. In terms of biological role, GTP-specific succinyl-CoA synthetase functions in the citric acid cycle (TCA), coupling the hydrolysis of succinyl-CoA to the synthesis of GTP and thus represents the only step of substrate-level phosphorylation in the TCA. The beta subunit provides nucleotide specificity of the enzyme and binds the substrate succinate, while the binding sites for coenzyme A and phosphate are found in the alpha subunit. This chain is Succinate--CoA ligase [GDP-forming] subunit beta, mitochondrial, found in Columba livia (Rock dove).